A 475-amino-acid polypeptide reads, in one-letter code: MQYEAVIGLEVHAQLLTESKIFCGCSTQFGAEPNTQVCPVCLGMPGVLPVLNKKAVEYTVKTGLAMNCKIAPYSRFARKNYFYPDLPKGYQISQYELPLCEDGYLEIMLNGTKRKIRIKRIHLEEDAGKNIHDPSGYSFVDFNRTGVPLMEIVSEPDIRSPKEAALYMKKLRAILRYLGVCDGNLEQGSLRCDANVSVRPVGSTEFGVKTEIKNINSFRFVEKALEYEIKRQIKLIENGEKIIQETRLWDSQTGTTQSMRSKEEAHDYRYFPEPDLVPVVVSEDWIEKIKKDMPELPDQKIERFIKEYGLPQYDSEILTEEKALSEWFEEAVKLGGKPKEVANWIMVELLRLLNEEGKDINECSLKPIQLVELIELINKGTINRNTAKEVFEEMYKTGKTAEAIVREKGLTQISDDSVIIEAIKEVMNKNPKEVERFRNGEEKLIGFFVGQVMKITKGKANPKLVNELIFKILKE.

This sequence belongs to the GatB/GatE family. GatB subfamily. In terms of assembly, heterotrimer of A, B and C subunits.

The enzyme catalyses L-glutamyl-tRNA(Gln) + L-glutamine + ATP + H2O = L-glutaminyl-tRNA(Gln) + L-glutamate + ADP + phosphate + H(+). The catalysed reaction is L-aspartyl-tRNA(Asn) + L-glutamine + ATP + H2O = L-asparaginyl-tRNA(Asn) + L-glutamate + ADP + phosphate + 2 H(+). Functionally, allows the formation of correctly charged Asn-tRNA(Asn) or Gln-tRNA(Gln) through the transamidation of misacylated Asp-tRNA(Asn) or Glu-tRNA(Gln) in organisms which lack either or both of asparaginyl-tRNA or glutaminyl-tRNA synthetases. The reaction takes place in the presence of glutamine and ATP through an activated phospho-Asp-tRNA(Asn) or phospho-Glu-tRNA(Gln). The protein is Aspartyl/glutamyl-tRNA(Asn/Gln) amidotransferase subunit B of Thermodesulfovibrio yellowstonii (strain ATCC 51303 / DSM 11347 / YP87).